The primary structure comprises 185 residues: dCTP deaminase (185 aa).

DCTP-binding positions include 107–112, 131–133, Q152, Y166, and Q176; these read KSTYAR and TLE. E133 acts as the Proton donor/acceptor in catalysis.

Belongs to the dCTP deaminase family. In terms of assembly, homotrimer.

It catalyses the reaction dCTP + H2O + H(+) = dUTP + NH4(+). The protein operates within pyrimidine metabolism; dUMP biosynthesis; dUMP from dCTP (dUTP route): step 1/2. In terms of biological role, catalyzes the deamination of dCTP to dUTP. This Wolbachia sp. subsp. Brugia malayi (strain TRS) protein is dCTP deaminase.